Consider the following 189-residue polypeptide: dCTP deaminase (189 aa).

Residues 112–117, 136–138, Q157, Y171, and Q181 each bind dCTP; these read KSTYAR and TLE. The Proton donor/acceptor role is filled by E138.

Belongs to the dCTP deaminase family. In terms of assembly, homotrimer.

It carries out the reaction dCTP + H2O + H(+) = dUTP + NH4(+). It functions in the pathway pyrimidine metabolism; dUMP biosynthesis; dUMP from dCTP (dUTP route): step 1/2. Its function is as follows. Catalyzes the deamination of dCTP to dUTP. The chain is dCTP deaminase from Xanthomonas euvesicatoria pv. vesicatoria (strain 85-10) (Xanthomonas campestris pv. vesicatoria).